A 193-amino-acid polypeptide reads, in one-letter code: dCTP deaminase (193 aa).

DCTP-binding positions include 110–115, D128, 136–138, Y171, K178, and Q182; these read RSSLAR and VLE. The active-site Proton donor/acceptor is the E138.

Belongs to the dCTP deaminase family. Homotrimer.

The enzyme catalyses dCTP + H2O + H(+) = dUTP + NH4(+). It functions in the pathway pyrimidine metabolism; dUMP biosynthesis; dUMP from dCTP (dUTP route): step 1/2. In terms of biological role, catalyzes the deamination of dCTP to dUTP. The chain is dCTP deaminase from Buchnera aphidicola subsp. Baizongia pistaciae (strain Bp).